The chain runs to 51 residues: Insulin (51 aa).

3 disulfide bridges follow: cysteine 7–cysteine 37, cysteine 19–cysteine 50, and cysteine 36–cysteine 41.

This sequence belongs to the insulin family. Heterodimer of a B chain and an A chain linked by two disulfide bonds.

Its subcellular location is the secreted. Functionally, insulin decreases blood glucose concentration. It increases cell permeability to monosaccharides, amino acids and fatty acids. It accelerates glycolysis, the pentose phosphate cycle, and glycogen synthesis in liver. The sequence is that of Insulin (INS) from Didelphis virginiana (North American opossum).